The sequence spans 229 residues: Adapter protein MecA (229 aa).

This sequence belongs to the MecA family. As to quaternary structure, homodimer.

Functionally, enables the recognition and targeting of unfolded and aggregated proteins to the ClpC protease or to other proteins involved in proteolysis. The chain is Adapter protein MecA from Latilactobacillus sakei subsp. sakei (strain 23K) (Lactobacillus sakei subsp. sakei).